The following is a 210-amino-acid chain: Large ribosomal subunit protein bL25 (210 aa).

Belongs to the bacterial ribosomal protein bL25 family. CTC subfamily. In terms of assembly, part of the 50S ribosomal subunit; part of the 5S rRNA/L5/L18/L25 subcomplex. Contacts the 5S rRNA. Binds to the 5S rRNA independently of L5 and L18.

Functionally, this is one of the proteins that binds to the 5S RNA in the ribosome where it forms part of the central protuberance. The chain is Large ribosomal subunit protein bL25 from Frankia casuarinae (strain DSM 45818 / CECT 9043 / HFP020203 / CcI3).